The sequence spans 296 residues: Biliverdin reductase A (296 aa).

Positions 1-2 (MN) are excised as a propeptide. NADP(+)-binding positions include 16–19 (VGRA), 44–46 (SRR), 77–80 (SSSH), and Tyr-98. Phosphothreonine is present on Thr-174. A phosphoserine mark is found at Ser-178 and Ser-230. N6-acetyllysine occurs at positions 248 and 253. Zn(2+) contacts are provided by His-280, Cys-281, Cys-292, and Cys-293.

It belongs to the Gfo/Idh/MocA family. Biliverdin reductase subfamily. As to quaternary structure, monomer. Requires Zn(2+) as cofactor. In terms of tissue distribution, liver.

It localises to the cytoplasm. It is found in the cytosol. It catalyses the reaction (4Z,15Z)-bilirubin IXalpha + NAD(+) = biliverdin IXalpha + NADH + H(+). The enzyme catalyses (4Z,15Z)-bilirubin IXalpha + NADP(+) = biliverdin IXalpha + NADPH + H(+). It functions in the pathway porphyrin-containing compound metabolism; protoheme degradation. Reduces the gamma-methene bridge of the open tetrapyrrole, biliverdin IXalpha, to bilirubin with the concomitant oxidation of a NADH or NADPH cofactor. Does not reduce bilirubin IXbeta. Uses the reactants NADH or NADPH depending on the pH; NADH is used at the acidic pH range (6-6.9) and NADPH at the alkaline range (8.5-8.7). NADPH, however, is the probable reactant in biological systems. The polypeptide is Biliverdin reductase A (Homo sapiens (Human)).